The sequence spans 439 residues: Xaa-Pro dipeptidase (439 aa).

5 residues coordinate Mn(2+): Asp-244, Asp-255, His-335, Glu-380, and Glu-419.

Belongs to the peptidase M24B family. Bacterial-type prolidase subfamily. Mn(2+) serves as cofactor.

It catalyses the reaction Xaa-L-Pro dipeptide + H2O = an L-alpha-amino acid + L-proline. Splits dipeptides with a prolyl residue in the C-terminal position. The protein is Xaa-Pro dipeptidase of Shewanella woodyi (strain ATCC 51908 / MS32).